Reading from the N-terminus, the 393-residue chain is Golgi membrane protein 1 (393 aa).

Met1 is subject to N-acetylmethionine. The Cytoplasmic segment spans residues 1–12 (MMGLGNGRRSMK). Residues 13–35 (SPPLILAALVACVIVLGFNYWIA) traverse the membrane as a helical; Signal-anchor for type II membrane protein segment. The Lumenal segment spans residues 36–393 (SSRSVELQTR…QVGIHIPQQA (358 aa)). The stretch at 40–183 (VELQTRIVEL…IEEVIRKRNE (144 aa)) forms a coiled coil. 2 N-linked (GlcNAc...) asparagine glycosylation sites follow: Asn109 and Asn144. Disordered regions lie at residues 180–247 (KRNE…QVQN) and 284–352 (HTQL…LAGN). A Phosphoserine modification is found at Ser187. 2 stretches are compositionally biased toward polar residues: residues 192–201 (ETNNQHQQAL) and 227–247 (NKSQIPAPNSESLGLKPQVQN). Asn227 carries an N-linked (GlcNAc...) asparagine glycan. Basic and acidic residues predominate over residues 294–320 (RPEEDSQYPEREQLVIRDRQEQQRASE). Residues 330–339 (DEYDMDENEA) are compositionally biased toward acidic residues.

It belongs to the GOLM family. As to quaternary structure, interacts with DYM. Post-translationally, glycosylated. Phosphorylation sites are present in the extracellular medium.

It localises to the golgi apparatus. The protein localises to the cis-Golgi network membrane. In terms of biological role, unknown. Cellular response protein to viral infection. The chain is Golgi membrane protein 1 (Golm1) from Mus musculus (Mouse).